Consider the following 593-residue polypeptide: MAIDPQPSSPSLSSETIANDTIGNDNNVNEPSVEPKTQENQHTVPPRLSRIYSQAHHISQSFIDQNYPGEGTTQAPYRINFLPDDTQNAQLLPRWKKWAFVLLQSLACLATTFASSAYSGGIKQVIRAFGISQEVATLGISLYVLGFTFGPLIWAPLSELYGRKKVFFFTFMVATAFSAGAAGAGSIASLLVLRFLTGSIGSAPLSNAPALIADMFDKSERGLAMCMFSGAPFLGPAIGPIAGGFLGEAAGWRWLHGLMAAFTGVTWIACTVFIPETYAPYILRKRAQHMSKLTGKVYISTLDADKPPSSAAHQLKNALTRPWLLLFKEPIVFITSIYISIIYGTMYMCFAAFPIVFQKGRGWSQGIGGLAFTGIVIGVVLSIISFAFEDKRYARAAQRRGAPMEPEDRLPPAIMGSLLIPIGLFWFAWTTFPSVHWIVPIIGTVFFAWGLVLVFMALLNYLIDSYVIFAASIMAANSALRSLFGAAFPLFTRQMYDGLGVQWASSIPAFLALACVPFPFLFYKYGRQIRMKCEYAAEAANVLQKMRSLHVTVTEDDAMNEAEEMWRARTHNSHASAAHSHGHRRSLSYTRSV.

Residues 1 to 44 (MAIDPQPSSPSLSSETIANDTIGNDNNVNEPSVEPKTQENQHTV) are disordered. Positions 9 to 30 (SPSLSSETIANDTIGNDNNVNE) are enriched in polar residues. N-linked (GlcNAc...) asparagine glycosylation is present at asparagine 19. 12 helical membrane passes run 98-118 (WAFV…SSAY), 135-155 (VATL…LIWA), 167-187 (FFFT…AGSI), 195-215 (FLTG…IADM), 227-247 (MFSG…GFLG), 254-274 (WLHG…TVFI), 337-357 (IYIS…PIVF), 367-387 (IGGL…ISFA), 410-430 (LPPA…FAWT), 438-458 (IVPI…FMAL), 468-488 (IFAA…GAAF), and 503-523 (WASS…FLFY). A disordered region spans residues 570 to 593 (THNSHASAAHSHGHRRSLSYTRSV).

This sequence belongs to the major facilitator superfamily. DHA1 family. Polyamines/proton antiporter (TC 2.A.1.2.16) subfamily.

Its subcellular location is the cell membrane. Functionally, efflux pump involved in export of fusaric acid, a mycotoxin with low to moderate toxicity to animals and humans, but with high phytotoxic properties. Constitutes a self-protecting mechanism of the fungus against critical levels of FSA within the cell. The sequence is that of Efflux pump FUBT from Fusarium oxysporum (Fusarium vascular wilt).